A 921-amino-acid chain; its full sequence is MEYKDTLLMPKTDFPMRGNLPNKEPEWQAKWEEEKLYEKIQEKNAGRKAYILHDGPPYANGELHMGHALNKTIKDIIVRYKSMAGFSSPYVPGWDTHGLPIETAIAKKGVKRKEMSIAEFRKLCAEYAMTQVDGQRTGFKRLGINGDWENPYITLLPEYEAEQIKVFGEMAKKGYIYKGKKPVYWSPSSESALAEAEIEYQDKKSASIFVAFKVTDGKGVLDEGTNIVIWTTTPWTIPANMGITVNPDLDYVVIESAGEKYVVAEALLPSLREKLGFEDATVVKTVRGSELDRVVTKHPFYDRDSLVMNGEHATAEAGTGAVHTAPGHGEDDFLIGKKYDLEVLAPLDDRGVFTEEAPGFEGVFYDTANKMVTEKLEEVGALLKMEFITHSYPHDWRTKKPVIFRATAQWFASIDAFRDDLLAAVKGVNWTPAWGETRLFNMVRDRGDWVISRQRAWGVPLPIFYAENGEAIITDETINHISELFREHGSNVWFERDVKDLLPAGFTHPGSPNGEFTKETDIMDVWFDSGSSHQAVLNARPELSRPADLYMEGSDQYRGWFNSSLTTAVAITGEAPYRNVLSHGFALDGEGRKMSKSLGNTLLPGKVIKQLGADIVRLWVASVDYQADVRVSDEILKQVSEVYRKIRNTMRFLLGNINDFNPTTNAVSYENLREVDKYMLIKLNDLVKNVKDNYEAFEFSTIYHQINNFCTVELSQFYMDFAKDVVYIEAADSHDRRAMQTVFYEAVVTLTKLLAPILPHTTEEVWNSLIGEGVESIHLQDLPEVKVLADSEEITAKWDAFMQIRDNVQKALEFARNEKLIGKSMLAKVTLYVDGEAKTLFDSLEGDFAQLFIVSDFELVEGLENAPESAFKSNQVAVQITVAEGETCERCRVVKKDVGVNPKHPTLCGRCADIVVKHYEA.

Positions 57 to 67 match the 'HIGH' region motif; it reads PYANGELHMGH. L-isoleucyl-5'-AMP is bound at residue Glu552. A 'KMSKS' region motif is present at residues 593–597; it reads KMSKS. Residue Lys596 participates in ATP binding. 4 residues coordinate Zn(2+): Cys888, Cys891, Cys908, and Cys911.

The protein belongs to the class-I aminoacyl-tRNA synthetase family. IleS type 1 subfamily. As to quaternary structure, monomer. Zn(2+) is required as a cofactor.

It localises to the cytoplasm. The enzyme catalyses tRNA(Ile) + L-isoleucine + ATP = L-isoleucyl-tRNA(Ile) + AMP + diphosphate. Catalyzes the attachment of isoleucine to tRNA(Ile). As IleRS can inadvertently accommodate and process structurally similar amino acids such as valine, to avoid such errors it has two additional distinct tRNA(Ile)-dependent editing activities. One activity is designated as 'pretransfer' editing and involves the hydrolysis of activated Val-AMP. The other activity is designated 'posttransfer' editing and involves deacylation of mischarged Val-tRNA(Ile). This is Isoleucine--tRNA ligase from Listeria monocytogenes serotype 4b (strain F2365).